The following is a 260-amino-acid chain: Malonyl-[acyl-carrier protein] O-methyltransferase (260 aa).

Belongs to the methyltransferase superfamily.

The enzyme catalyses malonyl-[ACP] + S-adenosyl-L-methionine = malonyl-[ACP] methyl ester + S-adenosyl-L-homocysteine. It participates in cofactor biosynthesis; biotin biosynthesis. Functionally, converts the free carboxyl group of a malonyl-thioester to its methyl ester by transfer of a methyl group from S-adenosyl-L-methionine (SAM). It allows to synthesize pimeloyl-ACP via the fatty acid synthetic pathway. In Haemophilus influenzae (strain ATCC 51907 / DSM 11121 / KW20 / Rd), this protein is Malonyl-[acyl-carrier protein] O-methyltransferase.